Here is a 524-residue protein sequence, read N- to C-terminus: Capsid scaffolding protein (524 aa).

Catalysis depends on charge relay system residues histidine 47, serine 116, and histidine 137. The interval 268–287 (DDLIPVPRSAFLNMLESTVS) is interaction with pAP. The short motif at 359 to 365 (RPRKRAR) is the Nuclear localization signal element. The tract at residues 359–378 (RPRKRAREDPEDEVSFPGEE) is disordered. The interaction with major capsid protein stretch occupies residues 504–524 (AETSKAATLQKLFCDEMLSKQ).

The protein belongs to the herpesviridae capsid scaffolding protein family. As to quaternary structure, homomultimer. Interacts with major capsid protein. In terms of assembly, exists in a monomer-dimer equilibrium with the dimer being the active species. In terms of processing, capsid scaffolding protein is cleaved by assemblin after formation of the spherical procapsid. As a result, the capsid obtains its mature, icosahedral shape. Cleavages occur at two or more sites: release (R-site) and maturation (M-site).

It is found in the host cytoplasm. The protein localises to the host nucleus. It catalyses the reaction Cleaves -Ala-|-Ser- and -Ala-|-Ala- bonds in the scaffold protein.. Functionally, acts as a scaffold protein by binding major capsid protein in the cytoplasm, inducing the nuclear localization of both proteins. Multimerizes in the nucleus such as major capsid protein forms the icosahedral T=16 capsid. Autocatalytic cleavage releases the assembly protein, and subsequently abolishes interaction with major capsid protein. Cleavages products are evicted from the capsid before or during DNA packaging. Its function is as follows. Protease that plays an essential role in virion assembly within the nucleus. Catalyzes the cleavage of the assembly protein after formation of the spherical procapsid. By that cleavage, the capsid matures and gains its icosahedral shape. The cleavage sites seem to include -Ala-Ser-, -Ala-Ala-, as well as Ala-Thr bonds. Assemblin and cleavages products are evicted from the capsid before or during DNA packaging. In terms of biological role, plays a major role in capsid assembly. Acts as a scaffold protein by binding major capsid protein. Multimerizes in the nucleus such as major capsid protein forms the icosahedral T=16 capsid. Cleaved by assemblin after capsid completion. The cleavages products are evicted from the capsid before or during DNA packaging. This Connochaetes taurinus (Blue wildebeest) protein is Capsid scaffolding protein (17).